The following is a 469-amino-acid chain: Glutamate--tRNA ligase (469 aa).

The 'HIGH' region motif lies at 9-19 (PSPTGYLHVGG). Zn(2+) contacts are provided by C98, C100, C125, and D127. The 'KMSKS' region signature appears at 237-241 (KLSKR). K240 contacts ATP.

The protein belongs to the class-I aminoacyl-tRNA synthetase family. Glutamate--tRNA ligase type 1 subfamily. In terms of assembly, monomer. Zn(2+) serves as cofactor.

It is found in the cytoplasm. The enzyme catalyses tRNA(Glu) + L-glutamate + ATP = L-glutamyl-tRNA(Glu) + AMP + diphosphate. Functionally, catalyzes the attachment of glutamate to tRNA(Glu) in a two-step reaction: glutamate is first activated by ATP to form Glu-AMP and then transferred to the acceptor end of tRNA(Glu). This Erwinia tasmaniensis (strain DSM 17950 / CFBP 7177 / CIP 109463 / NCPPB 4357 / Et1/99) protein is Glutamate--tRNA ligase.